The following is a 149-amino-acid chain: Large ribosomal subunit protein uL11 (149 aa).

It belongs to the universal ribosomal protein uL11 family. As to quaternary structure, part of the ribosomal stalk of the 50S ribosomal subunit. Interacts with L10 and the large rRNA to form the base of the stalk. L10 forms an elongated spine to which L12 dimers bind in a sequential fashion forming a multimeric L10(L12)X complex. Post-translationally, one or more lysine residues are methylated.

Forms part of the ribosomal stalk which helps the ribosome interact with GTP-bound translation factors. The polypeptide is Large ribosomal subunit protein uL11 (Methylorubrum extorquens (strain CM4 / NCIMB 13688) (Methylobacterium extorquens)).